The chain runs to 326 residues: MTTNTVVREAQSQAEYNPLAKQKAAAKLSRIPIKVEHGEALKKPDWIRVKAGSPTTRFYEIKDILRANKLHTVCEEASCPNIGECFGKGTATFMIMGDKCTRRCPFCDVGHGRPDPLDTNEPLNLAKTIAELRLKYVVITSVDRDDLRDGGSGHFVECIKNIRELSPLTQIEILVPDFRGRDDRALEILKAAPPDVMNHNLETAPRLYKEARPGSDYQFSLNLLKKFKALHPKVPTKSGIMVGLGETDEEILQVMRDMRAHDIDMLTIGQYLAPSNSHLPVRRYVHPDTFKMFEEEAYKMGFTHAAVGAMVRSSYHADQQAHAAGV.

The [4Fe-4S] cluster site is built by C74, C79, C85, C100, C104, C107, and S314. The 219-residue stretch at 85–303 folds into the Radical SAM core domain; sequence CFGKGTATFM…EEEAYKMGFT (219 aa).

The protein belongs to the radical SAM superfamily. Lipoyl synthase family. The cofactor is [4Fe-4S] cluster.

The protein localises to the cytoplasm. It carries out the reaction [[Fe-S] cluster scaffold protein carrying a second [4Fe-4S](2+) cluster] + N(6)-octanoyl-L-lysyl-[protein] + 2 oxidized [2Fe-2S]-[ferredoxin] + 2 S-adenosyl-L-methionine + 4 H(+) = [[Fe-S] cluster scaffold protein] + N(6)-[(R)-dihydrolipoyl]-L-lysyl-[protein] + 4 Fe(3+) + 2 hydrogen sulfide + 2 5'-deoxyadenosine + 2 L-methionine + 2 reduced [2Fe-2S]-[ferredoxin]. It functions in the pathway protein modification; protein lipoylation via endogenous pathway; protein N(6)-(lipoyl)lysine from octanoyl-[acyl-carrier-protein]: step 2/2. In terms of biological role, catalyzes the radical-mediated insertion of two sulfur atoms into the C-6 and C-8 positions of the octanoyl moiety bound to the lipoyl domains of lipoate-dependent enzymes, thereby converting the octanoylated domains into lipoylated derivatives. The protein is Lipoyl synthase of Delftia acidovorans (strain DSM 14801 / SPH-1).